The chain runs to 251 residues: Small ribosomal subunit protein uS2 (251 aa).

This sequence belongs to the universal ribosomal protein uS2 family.

The chain is Small ribosomal subunit protein uS2 from Nitrosomonas eutropha (strain DSM 101675 / C91 / Nm57).